The primary structure comprises 403 residues: GTPase Obg (403 aa).

Residues 1–159 enclose the Obg domain; that stretch reads MKFIDESLIR…RDLLLELMLL (159 aa). The region spanning 160 to 333 is the OBG-type G domain; the sequence is ADVGMLGFPN…LCRDIMDFII (174 aa). GTP is bound by residues 166–173, 191–195, 213–216, 283–286, and 314–316; these read GFPNAGKS, FTTLV, DIPG, NKID, and SAA. The Mg(2+) site is built by Ser173 and Thr193. The tract at residues 363 to 403 is disordered; it reads EYQFDDDEDWDDDWTEEDDDEDWDDDWTEEDDEGIEFIYKP. Acidic residues predominate over residues 365-397; the sequence is QFDDDEDWDDDWTEEDDDEDWDDDWTEEDDEGI.

The protein belongs to the TRAFAC class OBG-HflX-like GTPase superfamily. OBG GTPase family. As to quaternary structure, monomer. It depends on Mg(2+) as a cofactor.

It is found in the cytoplasm. Its function is as follows. An essential GTPase which binds GTP, GDP and possibly (p)ppGpp with moderate affinity, with high nucleotide exchange rates and a fairly low GTP hydrolysis rate. Plays a role in control of the cell cycle, stress response, ribosome biogenesis and in those bacteria that undergo differentiation, in morphogenesis control. This chain is GTPase Obg, found in Haemophilus influenzae (strain PittEE).